Reading from the N-terminus, the 257-residue chain is UPF0246 protein A1S_2267 (257 aa).

This sequence belongs to the UPF0246 family.

This is UPF0246 protein A1S_2267 from Acinetobacter baumannii (strain ATCC 17978 / DSM 105126 / CIP 53.77 / LMG 1025 / NCDC KC755 / 5377).